The following is a 793-amino-acid chain: Protocadherin beta-7 (793 aa).

Residues 1 to 26 (MEARVERAVQKRQVLFLCVFLGMSWA) form the signal peptide. Over 27 to 688 (GAEPLRYFVA…DQANLLTVYL (662 aa)) the chain is Extracellular. 5 Cadherin domains span residues 35–133 (VAEE…APVF), 138–242 (ISLK…APDF), 247–347 (YKVQ…RPEL), 352–451 (LTSP…APAF), and 456–561 (YTLF…SPFV). N-linked (GlcNAc...) asparagine glycosylation occurs at Asn-169. 2 N-linked (GlcNAc...) asparagine glycosylation sites follow: Asn-418 and Asn-436. N-linked (GlcNAc...) asparagine glycosylation is present at Asn-567. The region spanning 568–671 (SSAPCTEPLP…LVDGFSQPYL (104 aa)) is the Cadherin 6 domain. The chain crosses the membrane as a helical span at residues 689 to 709 (VVALASVSSLFLLSVLLFVAV). Over 710-793 (RLCRRSRAAP…NRPFQNNLGF (84 aa)) the chain is Cytoplasmic.

It is found in the cell membrane. Potential calcium-dependent cell-adhesion protein. May be involved in the establishment and maintenance of specific neuronal connections in the brain. This is Protocadherin beta-7 (PCDHB7) from Pan troglodytes (Chimpanzee).